The following is a 269-amino-acid chain: Shikimate dehydrogenase (NADP(+)) (269 aa).

Residues 14–16 and T61 contribute to the shikimate site; that span reads SKS. Residue K65 is the Proton acceptor of the active site. An NADP(+)-binding site is contributed by E77. The shikimate site is built by N86 and D102. NADP(+) contacts are provided by residues 126-130, 149-154, and M213; these read GAGGA and NRTLTK. Residue Y215 participates in shikimate binding. G238 serves as a coordination point for NADP(+).

Belongs to the shikimate dehydrogenase family. Homodimer.

It catalyses the reaction shikimate + NADP(+) = 3-dehydroshikimate + NADPH + H(+). It participates in metabolic intermediate biosynthesis; chorismate biosynthesis; chorismate from D-erythrose 4-phosphate and phosphoenolpyruvate: step 4/7. Involved in the biosynthesis of the chorismate, which leads to the biosynthesis of aromatic amino acids. Catalyzes the reversible NADPH linked reduction of 3-dehydroshikimate (DHSA) to yield shikimate (SA). This is Shikimate dehydrogenase (NADP(+)) from Actinobacillus succinogenes (strain ATCC 55618 / DSM 22257 / CCUG 43843 / 130Z).